The chain runs to 57 residues: Large ribosomal subunit protein bL32 (57 aa).

Basic residues predominate over residues 1-20 (MAVPKKKTSKAKRDQRRATW). Residues 1 to 24 (MAVPKKKTSKAKRDQRRATWRRQA) form a disordered region.

This sequence belongs to the bacterial ribosomal protein bL32 family.

The sequence is that of Large ribosomal subunit protein bL32 from Gloeothece citriformis (strain PCC 7424) (Cyanothece sp. (strain PCC 7424)).